Here is a 238-residue protein sequence, read N- to C-terminus: DNA repair protein RecO (238 aa).

The protein belongs to the RecO family.

Functionally, involved in DNA repair and RecF pathway recombination. The protein is DNA repair protein RecO of Aliivibrio fischeri (strain ATCC 700601 / ES114) (Vibrio fischeri).